The primary structure comprises 155 residues: 6,7-dimethyl-8-ribityllumazine synthase (155 aa).

Residues Phe-24, Ala-58–Glu-60, and Ala-82–Ile-84 each bind 5-amino-6-(D-ribitylamino)uracil. Ser-87–Thr-88 is a binding site for (2S)-2-hydroxy-3-oxobutyl phosphate. Catalysis depends on His-90, which acts as the Proton donor. A 5-amino-6-(D-ribitylamino)uracil-binding site is contributed by Phe-115. Arg-129 is a (2S)-2-hydroxy-3-oxobutyl phosphate binding site.

The protein belongs to the DMRL synthase family.

It carries out the reaction (2S)-2-hydroxy-3-oxobutyl phosphate + 5-amino-6-(D-ribitylamino)uracil = 6,7-dimethyl-8-(1-D-ribityl)lumazine + phosphate + 2 H2O + H(+). It participates in cofactor biosynthesis; riboflavin biosynthesis; riboflavin from 2-hydroxy-3-oxobutyl phosphate and 5-amino-6-(D-ribitylamino)uracil: step 1/2. Functionally, catalyzes the formation of 6,7-dimethyl-8-ribityllumazine by condensation of 5-amino-6-(D-ribitylamino)uracil with 3,4-dihydroxy-2-butanone 4-phosphate. This is the penultimate step in the biosynthesis of riboflavin. The protein is 6,7-dimethyl-8-ribityllumazine synthase of Chlorobium phaeobacteroides (strain BS1).